The sequence spans 150 residues: Probable histone H2A.7 (150 aa).

A compositionally biased stretch (basic residues) spans 1 to 12; that stretch reads MESTGKVKKAFG. Disordered stretches follow at residues 1–27 and 129–150; these read MEST…SVSK and KSAT…PKKA. At serine 146 the chain carries Phosphoserine. The SPKK motif motif lies at 146–149; the sequence is SPKK.

It belongs to the histone H2A family. In terms of assembly, the nucleosome is a histone octamer containing two molecules each of H2A, H2B, H3 and H4 assembled in one H3-H4 heterotetramer and two H2A-H2B heterodimers. The octamer wraps approximately 147 bp of DNA. Post-translationally, not ubiquitinated. Strong expression through-out the roots and leaves. Also found in meristems and dividing cells.

It is found in the nucleus. The protein localises to the chromosome. Functionally, core component of nucleosome. Nucleosomes wrap and compact DNA into chromatin, limiting DNA accessibility to the cellular machineries which require DNA as a template. Histones thereby play a central role in transcription regulation, DNA repair, DNA replication and chromosomal stability. DNA accessibility is regulated via a complex set of post-translational modifications of histones, also called histone code, and nucleosome remodeling. This chain is Probable histone H2A.7, found in Arabidopsis thaliana (Mouse-ear cress).